We begin with the raw amino-acid sequence, 175 residues long: Arginine repressor (175 aa).

The interval 1 to 23 (MSVSTPERGGAEQGKGPAIARTR) is disordered.

This sequence belongs to the ArgR family.

It is found in the cytoplasm. The protein operates within amino-acid biosynthesis; L-arginine biosynthesis [regulation]. Its function is as follows. Regulates arginine biosynthesis genes. This is Arginine repressor from Nocardia farcinica (strain IFM 10152).